A 190-amino-acid chain; its full sequence is uncharacterized protein (190 aa).

Residues 1–16 (MAILPEFISQTPPVTR) are Cytoplasmic-facing. The helical transmembrane segment at 17-37 (YIVLGTLFTTLAVNFGYVSDL) threads the bilayer. Residues 38–55 (KIFFNWKLFLAKGEYWRA) are Lumenal-facing. A helical transmembrane segment spans residues 56–76 (ITTFLYVGPFGLELILYLSFL). The Cytoplasmic segment spans residues 77–98 (LRFMSMLERSSPPPQTQSFLKT). The helical transmembrane segment at 99 to 119 (VLIVWFSLLVTSYFSYMPFAA) threads the bilayer. Residues 120 to 138 (SYFSFTMLYIWSWKHPLYR) lie on the Lumenal side of the membrane. A helical transmembrane segment spans residues 139–159 (ISILGLFDVKAPYVPWVMVLL). The Cytoplasmic portion of the chain corresponds to 160-163 (RWLR). A helical transmembrane segment spans residues 164-184 (TGIFPLLDLISALIGHVYFFV). Residues 185–190 (TDFSTV) are Lumenal-facing.

The protein belongs to the derlin family.

The protein resides in the endoplasmic reticulum membrane. This is an uncharacterized protein from Schizosaccharomyces pombe (strain 972 / ATCC 24843) (Fission yeast).